We begin with the raw amino-acid sequence, 1172 residues long: Pesticidal crystal protein Cry1Ha (1172 aa).

This sequence belongs to the delta endotoxin family.

Promotes colloidosmotic lysis by binding to the midgut epithelial cells of insects. This is Pesticidal crystal protein Cry1Ha (cry1Ha) from Bacillus thuringiensis.